The sequence spans 346 residues: Protein RecA (346 aa).

67–74 (GPESSGKT) is a binding site for ATP.

Belongs to the RecA family.

It is found in the cytoplasm. Functionally, can catalyze the hydrolysis of ATP in the presence of single-stranded DNA, the ATP-dependent uptake of single-stranded DNA by duplex DNA, and the ATP-dependent hybridization of homologous single-stranded DNAs. It interacts with LexA causing its activation and leading to its autocatalytic cleavage. The polypeptide is Protein RecA (Mycobacterium ulcerans (strain Agy99)).